The primary structure comprises 186 residues: Ribosome-recycling factor (186 aa).

The protein belongs to the RRF family.

Its subcellular location is the cytoplasm. Its function is as follows. Responsible for the release of ribosomes from messenger RNA at the termination of protein biosynthesis. May increase the efficiency of translation by recycling ribosomes from one round of translation to another. The sequence is that of Ribosome-recycling factor from Rickettsia canadensis (strain McKiel).